The following is a 193-amino-acid chain: Protein GrpE (193 aa).

The segment at 1–40 (MTEENRPQPDQPELTVTSESSVQETGENKARTPEQEGEAM) is disordered. Residues 14–25 (LTVTSESSVQET) show a composition bias toward polar residues.

This sequence belongs to the GrpE family. Homodimer.

It localises to the cytoplasm. In terms of biological role, participates actively in the response to hyperosmotic and heat shock by preventing the aggregation of stress-denatured proteins, in association with DnaK and GrpE. It is the nucleotide exchange factor for DnaK and may function as a thermosensor. Unfolded proteins bind initially to DnaJ; upon interaction with the DnaJ-bound protein, DnaK hydrolyzes its bound ATP, resulting in the formation of a stable complex. GrpE releases ADP from DnaK; ATP binding to DnaK triggers the release of the substrate protein, thus completing the reaction cycle. Several rounds of ATP-dependent interactions between DnaJ, DnaK and GrpE are required for fully efficient folding. The protein is Protein GrpE of Nitrosospira multiformis (strain ATCC 25196 / NCIMB 11849 / C 71).